The sequence spans 100 residues: Small ribosomal subunit protein uS14c (100 aa).

This sequence belongs to the universal ribosomal protein uS14 family. In terms of assembly, part of the 30S ribosomal subunit.

The protein resides in the plastid. It is found in the chloroplast. In terms of biological role, binds 16S rRNA, required for the assembly of 30S particles. This chain is Small ribosomal subunit protein uS14c, found in Gracilaria tenuistipitata var. liui (Red alga).